A 149-amino-acid chain; its full sequence is Macrodomain Ter protein (149 aa).

This sequence belongs to the MatP family. In terms of assembly, homodimer.

The protein localises to the cytoplasm. Functionally, required for spatial organization of the terminus region of the chromosome (Ter macrodomain) during the cell cycle. Prevents early segregation of duplicated Ter macrodomains during cell division. Binds specifically to matS, which is a 13 bp signature motif repeated within the Ter macrodomain. This is Macrodomain Ter protein from Vibrio vulnificus (strain YJ016).